Here is a 72-residue protein sequence, read N- to C-terminus: SRY-related protein MG44 (72 aa).

A DNA-binding region (HMG box) is located at residues 1-69; that stretch reads VKRPMNAFMV…KHMADYPNYK (69 aa).

It localises to the nucleus. The chain is SRY-related protein MG44 from Tarentola mauritanica (Common wall gecko).